Reading from the N-terminus, the 228-residue chain is 2,3-bisphosphoglycerate-dependent phosphoglycerate mutase (228 aa).

Residues 8–15, 21–22, R60, 87–90, K98, 114–115, and 183–184 contribute to the substrate site; these read RHGQSVWN, TG, ERHY, RR, and GN. Residue H9 is the Tele-phosphohistidine intermediate of the active site. E87 acts as the Proton donor/acceptor in catalysis.

The protein belongs to the phosphoglycerate mutase family. BPG-dependent PGAM subfamily. In terms of assembly, homodimer.

The enzyme catalyses (2R)-2-phosphoglycerate = (2R)-3-phosphoglycerate. The protein operates within carbohydrate degradation; glycolysis; pyruvate from D-glyceraldehyde 3-phosphate: step 3/5. In terms of biological role, catalyzes the interconversion of 2-phosphoglycerate and 3-phosphoglycerate. In Rhodospirillum centenum (strain ATCC 51521 / SW), this protein is 2,3-bisphosphoglycerate-dependent phosphoglycerate mutase.